The sequence spans 100 residues: Large ribosomal subunit protein uL23 (100 aa).

Belongs to the universal ribosomal protein uL23 family. In terms of assembly, part of the 50S ribosomal subunit. Contacts protein L29, and trigger factor when it is bound to the ribosome.

In terms of biological role, one of the early assembly proteins it binds 23S rRNA. One of the proteins that surrounds the polypeptide exit tunnel on the outside of the ribosome. Forms the main docking site for trigger factor binding to the ribosome. This chain is Large ribosomal subunit protein uL23, found in Aggregatibacter actinomycetemcomitans (Actinobacillus actinomycetemcomitans).